A 468-amino-acid polypeptide reads, in one-letter code: MEQPQTENPAPSKATSAETVESENHEALSGPEKHPQDKDGADADGAAGEQEPGDQTLPPAQDGENLECPPPEASSSPPGPACGTSPKVETAEVCSRPQELPQSPRIQQPELDFYCVKWIPWKGERTPIITQSTNGPCPLLAIMNILFLQWKVKLPPQKEVITSDELLTHLGNCLLSIKPQEKSEGLQLNFQQNVDDAMTVLPKLATGLDVNVRFTGVSDFEYTPECSIFDLLGIPLYHGWLVDPQSPEAVSAVGKLSYNQLVEKIITCKHSSDSNLVTEGLVAEQFLETTAAQLTYHGLCELTAAATEDELSVFFRNNHFSTMTKHKSHLYLLVTDQGFLQEEQVVWESLHNVDGDSCFCDSDFHLSHSLGKSHGAEGGGGSPEKQLQVDQDYLIALSLQQQQQPQGTLGLSDLELAQQLQQEEYQQQQAVQPVRTRAPSPQGRGATSGRPAGERRQRSKTESDCVLL.

Polar residues predominate over residues 1 to 19 (MEQPQTENPAPSKATSAET). The interval 1–105 (MEQPQTENPA…RPQELPQSPR (105 aa)) is disordered. Residues 22–41 (SENHEALSGPEKHPQDKDGA) are compositionally biased toward basic and acidic residues. The span at 43-54 (ADGAAGEQEPGD) shows a compositional bias: low complexity. Residues 68-80 (CPPPEASSSPPGP) are compositionally biased toward pro residues. Ser103 is subject to Phosphoserine. Residue Cys137 is the Nucleophile of the active site. His319 (proton acceptor) is an active-site residue. Residues 388–427 (QVDQDYLIALSLQQQQQPQGTLGLSDLELAQQLQQEEYQQ) are ubiquitin-binding domain (UBD). Residues 423–432 (EEYQQQQAVQ) show a composition bias toward low complexity. The segment at 423 to 468 (EEYQQQQAVQPVRTRAPSPQGRGATSGRPAGERRQRSKTESDCVLL) is disordered. Phosphoserine is present on Ser440. Residues 452–468 (AGERRQRSKTESDCVLL) are compositionally biased toward basic and acidic residues.

Belongs to the MINDY deubiquitinase family. FAM63 subfamily.

The catalysed reaction is Thiol-dependent hydrolysis of ester, thioester, amide, peptide and isopeptide bonds formed by the C-terminal Gly of ubiquitin (a 76-residue protein attached to proteins as an intracellular targeting signal).. In terms of biological role, hydrolase that can specifically remove 'Lys-48'-linked conjugated ubiquitin from proteins. Has exodeubiquitinase activity and has a preference for long polyubiquitin chains. May play a regulatory role at the level of protein turnover. The polypeptide is Ubiquitin carboxyl-terminal hydrolase MINDY-1 (Mindy1) (Mus musculus (Mouse)).